The sequence spans 291 residues: 4-diphosphocytidyl-2-C-methyl-D-erythritol kinase (291 aa).

Residue Lys11 is part of the active site. Residue 95-105 (PVAAGLAGGSS) coordinates ATP. Residue Asp137 is part of the active site.

It belongs to the GHMP kinase family. IspE subfamily.

The catalysed reaction is 4-CDP-2-C-methyl-D-erythritol + ATP = 4-CDP-2-C-methyl-D-erythritol 2-phosphate + ADP + H(+). Its pathway is isoprenoid biosynthesis; isopentenyl diphosphate biosynthesis via DXP pathway; isopentenyl diphosphate from 1-deoxy-D-xylulose 5-phosphate: step 3/6. Functionally, catalyzes the phosphorylation of the position 2 hydroxy group of 4-diphosphocytidyl-2C-methyl-D-erythritol. This chain is 4-diphosphocytidyl-2-C-methyl-D-erythritol kinase, found in Alkaliphilus metalliredigens (strain QYMF).